We begin with the raw amino-acid sequence, 236 residues long: Rho-related GTP-binding protein RhoV (236 aa).

The interval 1-27 is disordered; the sequence is MPPRELSEAEPPPLPASTPPPRRRSAP. The span at 10-20 shows a compositional bias: pro residues; sequence EPPPLPASTPP. S25 carries the phosphoserine modification. GTP is bound by residues 38–45, 85–89, and 143–146; these read GDGAVGKS, DTAGQ, and TQAD. C234 is lipidated: S-palmitoyl cysteine.

The protein belongs to the small GTPase superfamily. Rho family. As to quaternary structure, interacts with PAK2. Mg(2+) is required as a cofactor.

It localises to the cell membrane. It is found in the endosome membrane. Its function is as follows. Plays a role in the control of the actin cytoskeleton via activation of the JNK pathway. The polypeptide is Rho-related GTP-binding protein RhoV (Mus musculus (Mouse)).